We begin with the raw amino-acid sequence, 293 residues long: Acetyl-coenzyme A carboxylase carboxyl transferase subunit beta (293 aa).

A CoA carboxyltransferase N-terminal domain is found at 29 to 293 (LWSKCPECGL…GCRPMEITSA (265 aa)). The Zn(2+) site is built by Cys-33, Cys-36, Cys-52, and Cys-55. The C4-type zinc finger occupies 33-55 (CPECGLVVYVKDLKGNASVCAGC).

Belongs to the AccD/PCCB family. Acetyl-CoA carboxylase is a heterohexamer composed of biotin carboxyl carrier protein (AccB), biotin carboxylase (AccC) and two subunits each of ACCase subunit alpha (AccA) and ACCase subunit beta (AccD). Zn(2+) is required as a cofactor.

It is found in the cytoplasm. The enzyme catalyses N(6)-carboxybiotinyl-L-lysyl-[protein] + acetyl-CoA = N(6)-biotinyl-L-lysyl-[protein] + malonyl-CoA. It participates in lipid metabolism; malonyl-CoA biosynthesis; malonyl-CoA from acetyl-CoA: step 1/1. In terms of biological role, component of the acetyl coenzyme A carboxylase (ACC) complex. Biotin carboxylase (BC) catalyzes the carboxylation of biotin on its carrier protein (BCCP) and then the CO(2) group is transferred by the transcarboxylase to acetyl-CoA to form malonyl-CoA. The chain is Acetyl-coenzyme A carboxylase carboxyl transferase subunit beta from Parasynechococcus marenigrum (strain WH8102).